We begin with the raw amino-acid sequence, 220 residues long: Protein-L-isoaspartate O-methyltransferase (220 aa).

Residue Ser68 is part of the active site.

This sequence belongs to the methyltransferase superfamily. L-isoaspartyl/D-aspartyl protein methyltransferase family.

Its subcellular location is the cytoplasm. The catalysed reaction is [protein]-L-isoaspartate + S-adenosyl-L-methionine = [protein]-L-isoaspartate alpha-methyl ester + S-adenosyl-L-homocysteine. Catalyzes the methyl esterification of L-isoaspartyl residues in peptides and proteins that result from spontaneous decomposition of normal L-aspartyl and L-asparaginyl residues. It plays a role in the repair and/or degradation of damaged proteins. In Dictyoglomus turgidum (strain DSM 6724 / Z-1310), this protein is Protein-L-isoaspartate O-methyltransferase.